A 433-amino-acid chain; its full sequence is MLDIQLLRKDLDGVAKRLADRGYTLDVAAFSALEAERRAIQTHTEELQARRNSLSKQIGAMKGKGEDTSAVMAEVGGIGDDMKASEAKLGEIQARLSDLMLGMPNVAHESVPVGKDEADNVEARRWGTPRQFDFEVKDHVDVGTPLGLDFETGAKLAGARFTMLRGPIARLHRALAQFMIDTHTQQHGYTETYTPYIVNPEILYGTGQLPKFADDMFRVEKGGAENTVTQYLISTSEISLTNTVRESIVDGAALPIKLTAHSPCFRSEAGSYGRDTRGMIRQHQFDKVEMVQVVAPETSYAALDEMVGHAEAILQKLGLPYRVITLCTGDMGFSAAKTFDLEVWLPAQNTYREISSCSNTEAFQARRMQARFRNAQGKPELVHTLNGSGLAVGRTLVAVLENYQNADGSVTVPEVLRPYMGGMERIDAPAQAS.

235 to 237 (TSE) serves as a coordination point for L-serine. ATP is bound at residue 266–268 (RSE). Glu289 contacts L-serine. 353-356 (EISS) lines the ATP pocket. L-serine is bound at residue Ser388.

Belongs to the class-II aminoacyl-tRNA synthetase family. Type-1 seryl-tRNA synthetase subfamily. In terms of assembly, homodimer. The tRNA molecule binds across the dimer.

The protein localises to the cytoplasm. The enzyme catalyses tRNA(Ser) + L-serine + ATP = L-seryl-tRNA(Ser) + AMP + diphosphate + H(+). It catalyses the reaction tRNA(Sec) + L-serine + ATP = L-seryl-tRNA(Sec) + AMP + diphosphate + H(+). It participates in aminoacyl-tRNA biosynthesis; selenocysteinyl-tRNA(Sec) biosynthesis; L-seryl-tRNA(Sec) from L-serine and tRNA(Sec): step 1/1. Catalyzes the attachment of serine to tRNA(Ser). Is also able to aminoacylate tRNA(Sec) with serine, to form the misacylated tRNA L-seryl-tRNA(Sec), which will be further converted into selenocysteinyl-tRNA(Sec). The chain is Serine--tRNA ligase from Burkholderia orbicola (strain MC0-3).